The primary structure comprises 614 residues: Afadin- and alpha-actinin-binding protein (614 aa).

Coiled coils occupy residues 131 to 227 and 266 to 293; these read MDHL…IAMD and RQKQ…SLLS. 3 positions are modified to phosphoserine: Ser-290, Ser-293, and Ser-312. Residues 292-317 form a disordered region; it reads LSPQKKKPRERVDDSTGTVISDVEED. Residues 374–460 are a coiled coil; the sequence is ISRQDHEQET…RSFTEAAIRL (87 aa). A phosphoserine mark is found at Ser-536, Ser-540, and Ser-542.

It belongs to the ADIP family. As to quaternary structure, interacts with afadin and alpha-actinin. Interacts with VAV2. Interacts with SSX2 and SSX3. Does not interact with SSX1 and SSX4. Interacts with PCM1. Interacts with WRAP73. As to expression, widely expressed, with the highest expression in brain, intermediate expression in kidney, testis, spinal cord, liver, heart, lung, skeletal muscle, ovary, fetal liver and fetal brain, and little to no expression in pancreas and spleen. All specific brain regions showed intermediate to high expression, with highest expression in amygdala. Also expressed in fetal tissues, mainly in liver and brain.

It is found in the cell junction. The protein localises to the adherens junction. Its subcellular location is the nucleus. It localises to the cytoplasm. The protein resides in the cytoskeleton. It is found in the microtubule organizing center. The protein localises to the centrosome. Its subcellular location is the centriolar satellite. It localises to the cilium basal body. Its function is as follows. Belongs to an adhesion system, which plays a role in the organization of homotypic, interneuronal and heterotypic cell-cell adherens junctions (AJs). May connect the nectin-afadin and E-cadherin-catenin system through alpha-actinin and may be involved in organization of the actin cytoskeleton at AJs through afadin and alpha-actinin. Involved in cell movement: localizes at the leading edge of moving cells in response to PDGF and is required for the formation of the leading edge and the promotion of cell movement, possibly via activation of Rac signaling. Acts as a centrosome maturation factor, probably by maintaining the integrity of the pericentriolar material and proper microtubule nucleation at mitotic spindle poles. The function seems to implicate at least in part WRAP73; the SSX2IP:WRAP73 complex is proposed to act as regulator of spindle anchoring at the mitotic centrosome. Involved in ciliogenesis. It is required for targeted recruitment of the BBSome, CEP290, RAB8, and SSTR3 to the cilia. This Homo sapiens (Human) protein is Afadin- and alpha-actinin-binding protein (SSX2IP).